Reading from the N-terminus, the 284-residue chain is Formamidopyrimidine-DNA glycosylase (284 aa).

The active-site Schiff-base intermediate with DNA is the Pro2. Glu3 functions as the Proton donor in the catalytic mechanism. Lys58 functions as the Proton donor; for beta-elimination activity in the catalytic mechanism. His101, Arg120, and Arg163 together coordinate DNA. The segment at 248–284 (RVYDRENAPCVTAGCPDVVRRVVQSGRSSFYCPSCQR) adopts an FPG-type zinc-finger fold. Arg274 (proton donor; for delta-elimination activity) is an active-site residue.

This sequence belongs to the FPG family. In terms of assembly, monomer. Zn(2+) serves as cofactor.

It carries out the reaction Hydrolysis of DNA containing ring-opened 7-methylguanine residues, releasing 2,6-diamino-4-hydroxy-5-(N-methyl)formamidopyrimidine.. The enzyme catalyses 2'-deoxyribonucleotide-(2'-deoxyribose 5'-phosphate)-2'-deoxyribonucleotide-DNA = a 3'-end 2'-deoxyribonucleotide-(2,3-dehydro-2,3-deoxyribose 5'-phosphate)-DNA + a 5'-end 5'-phospho-2'-deoxyribonucleoside-DNA + H(+). In terms of biological role, involved in base excision repair of DNA damaged by oxidation or by mutagenic agents. Acts as a DNA glycosylase that recognizes and removes damaged bases. Has a preference for oxidized purines, such as 7,8-dihydro-8-oxoguanine (8-oxoG). Has AP (apurinic/apyrimidinic) lyase activity and introduces nicks in the DNA strand. Cleaves the DNA backbone by beta-delta elimination to generate a single-strand break at the site of the removed base with both 3'- and 5'-phosphates. In Dinoroseobacter shibae (strain DSM 16493 / NCIMB 14021 / DFL 12), this protein is Formamidopyrimidine-DNA glycosylase.